Consider the following 450-residue polypeptide: MDMGNQHPSIKRLHEIQKEVKEIEQQVAVFSGLSTDRDYKKLERSLTKQLFEIDSVDTEGKGDIQQARKRAAQETERLLKELEQNANHPRRLEIEAIFKEAQALVEREITPFYQGGNCVNEEFEEGIQDVVLRLTQVKTGGKVSLRKARYRTLTKVCAVQEIIESCAKRQLSLPLSNDAHPSVSKINSVMCEVNKARGTLIALLMGVSSNDTCRHLACVLTGLVADLDALDVCGRTEIRNYRKEVVEEINKLQKYLDLDEEANSTHAYDLAQNHSILKIEEIRKKLKEVNSLLLKTENASDLYLGSKAELQGLIAQLDEVSLGKNPCIREARRRAVIEVQTLITYIDLKEALGKRQMYAEQTAAEHQSHKAVWTVLGNLSQIQQEVISFDGNKTDKNYMRLEELLTKQLLALDAVDPQGDERCKAARKQAVKLAQNILYYLDMKTDEWEY.

5 BAG domains span residues 9–86 (SIKR…EQNA), 95–167 (EAIF…ESCA), 182–260 (SVSK…DLDE), 275–350 (SILK…DLKE), and 365–442 (EHQS…YYLD).

As to quaternary structure, binds to the ATPase domain of HSP/HSC70 chaperones.

Co-chaperone for HSP/HSP70 proteins. It functions as a nucleotide-exchange factor promoting the release of ADP from HSP70, thereby activating HSP70-mediated protein refolding. The sequence is that of BAG family molecular chaperone regulator 5 (BAG5) from Gallus gallus (Chicken).